The sequence spans 236 residues: Small ribosomal subunit protein uS2c (236 aa).

The protein belongs to the universal ribosomal protein uS2 family.

Its subcellular location is the plastid. It is found in the chloroplast. This Oenothera parviflora (Small-flowered evening primrose) protein is Small ribosomal subunit protein uS2c (rps2).